A 713-amino-acid polypeptide reads, in one-letter code: Leucine-rich repeat-containing protein 4B (713 aa).

The N-terminal stretch at 1-35 (MARARGSPCPPLPPGRMSWPHGALLFLWLFSPPLG) is a signal peptide. Over 36-576 (AGGGGVAVTS…DLDDVMKTTK (541 aa)) the chain is Extracellular. The 39-residue stretch at 48 to 86 (GGGSPPATSCPVACSCSNQASRVICTRRDLAEVPASIPV) folds into the LRRNT domain. LRR repeat units lie at residues 87–108 (NTRY…TFKH), 111–132 (HLEI…AFNG), 135–156 (SLNT…AFEY), 159–180 (KLRE…AFNR), 183–205 (SLRR…AFEG), 208–229 (NLRY…TALV), 230–251 (RLEE…SFQG), 254–275 (SLRK…AFDD), and 278–299 (SLEE…LFTP). The N-linked (GlcNAc...) asparagine glycan is linked to N224. 8 N-linked (GlcNAc...) asparagine glycosylation sites follow: N283, N333, N374, N400, N422, N425, N444, and N452. The 53-residue stretch at 311–363 (NPWHCNCDVLWLSWWLKETVPSNTTCCARCHAPAGLKGRYIGELDQSHFTCYA) folds into the LRRCT domain. The Ig-like C2-type domain maps to 364-452 (PVIVEPPTDL…GNTTASATLN (89 aa)). C385 and C436 form a disulfide bridge. The interval 497 to 551 (TQPGEEALQPRGTEKEPPGPTTDGVWGGGRPGDAAGPASSSTTAPAPRSSRPTEK) is disordered. Positions 528–546 (GDAAGPASSSTTAPAPRSS) are enriched in low complexity. A helical membrane pass occupies residues 577–597 (IIIGCFVAITFMAAVMLVAFY). Over 598–713 (KLRKQHQLHK…SKENVQETQI (116 aa)) the chain is Cytoplasmic. S693 bears the Phosphoserine mark. Positions 694 to 713 (IHEPLLFKSGSKENVQETQI) are disordered. Positions 703 to 713 (GSKENVQETQI) are enriched in basic and acidic residues.

In terms of assembly, interacts with PTPRF. Interacts with DLG4. N-glycosylated. O-glycosylated; contains sialic acid.

Its subcellular location is the membrane. The protein resides in the presynaptic cell membrane. Its function is as follows. Synaptic adhesion protein. Regulates the formation of excitatory synapses. The trans-synaptic adhesion between LRRC4B and PTPRF regulates the formation of excitatory synapses in a bidirectional manner. In Homo sapiens (Human), this protein is Leucine-rich repeat-containing protein 4B (LRRC4B).